Here is a 489-residue protein sequence, read N- to C-terminus: 5'-AMP-activated protein kinase subunit gamma-3 (489 aa).

Residues 1–113 (MEPGLEHALR…PAGVGTPPTG (113 aa)) form a disordered region. A compositionally biased stretch (low complexity) spans 34–46 (SSSWPSPAVTSSS). Positions 50 to 62 (RGKRRAKALRWTR) are enriched in basic residues. 3 consecutive CBS domains span residues 197 to 258 (MATS…RSPL), 280 to 340 (CFKP…LLPR), and 355 to 415 (TFRD…HLDM). ADP is bound by residues Arg-225, 240-245 (MLTITD), Val-285, 306-307 (HR), and Lys-325. AMP contacts are provided by residues Arg-225, 240-245 (MLTITD), Val-285, His-306, 306-307 (HR), Lys-325, Thr-355, Ala-360, 381-382 (SA), 397-400 (SRFD), Arg-424, Leu-432, His-453, 453-454 (HR), and 469-472 (SLSD). ATP is bound by residues Arg-225, 240 to 245 (MLTITD), Val-285, 306 to 307 (HR), Arg-307, and Lys-325. The AMPK pseudosubstrate motif lies at 293–314 (LFEAVYTLIKNRIHRLPVLDPV). ADP is bound by residues 397 to 400 (SRFD), Arg-424, Leu-432, and 453 to 454 (HR). Residues 397-400 (SRFD), Arg-424, Leu-432, and 453-454 (HR) contribute to the ATP site. The region spanning 427-486 (CLEGVLSCQPHESLGEVIDRIAREQVHRLVLVDETQHLLGVVSLSDILQALVLSPAGIDA) is the CBS 4 domain.

Belongs to the 5'-AMP-activated protein kinase gamma subunit family. As to quaternary structure, AMPK is a heterotrimer of an alpha catalytic subunit (PRKAA1 or PRKAA2), a beta (PRKAB1 or PRKAB2) and a gamma non-catalytic subunits (PRKAG1, PRKAG2 or PRKAG3). Interacts with FNIP1 and FNIP2. Post-translationally, phosphorylated by ULK1; leading to negatively regulate AMPK activity and suggesting the existence of a regulatory feedback loop between ULK1 and AMPK. In terms of processing, glycosylated; O-GlcNAcylated by OGT, promoting the AMP-activated protein kinase (AMPK) activity. In terms of tissue distribution, skeletal muscle, with weak expression in heart and pancreas.

In terms of biological role, AMP/ATP-binding subunit of AMP-activated protein kinase (AMPK), an energy sensor protein kinase that plays a key role in regulating cellular energy metabolism. In response to reduction of intracellular ATP levels, AMPK activates energy-producing pathways and inhibits energy-consuming processes: inhibits protein, carbohydrate and lipid biosynthesis, as well as cell growth and proliferation. AMPK acts via direct phosphorylation of metabolic enzymes, and by longer-term effects via phosphorylation of transcription regulators. AMPK also acts as a regulator of cellular polarity by remodeling the actin cytoskeleton; probably by indirectly activating myosin. The AMPK gamma3 subunit is a non-catalytic subunit with a regulatory role in muscle energy metabolism. It mediates binding to AMP, ADP and ATP, leading to AMPK activation or inhibition: AMP-binding results in allosteric activation of alpha catalytic subunit (PRKAA1 or PRKAA2) both by inducing phosphorylation and preventing dephosphorylation of catalytic subunits. ADP also stimulates phosphorylation, without stimulating already phosphorylated catalytic subunit. ATP promotes dephosphorylation of catalytic subunit, rendering the AMPK enzyme inactive. In Homo sapiens (Human), this protein is 5'-AMP-activated protein kinase subunit gamma-3 (PRKAG3).